The primary structure comprises 561 residues: Dihydroxy-acid dehydratase (561 aa).

Cys-50 contributes to the [2Fe-2S] cluster binding site. Residue Asp-82 coordinates Mg(2+). Cys-123 is a [2Fe-2S] cluster binding site. Residues Asp-124 and Lys-125 each coordinate Mg(2+). Lys-125 carries the post-translational modification N6-carboxylysine. Cys-195 contacts [2Fe-2S] cluster. Residue Glu-447 coordinates Mg(2+). The Proton acceptor role is filled by Ser-473.

It belongs to the IlvD/Edd family. Homodimer. The cofactor is [2Fe-2S] cluster. It depends on Mg(2+) as a cofactor.

It carries out the reaction (2R)-2,3-dihydroxy-3-methylbutanoate = 3-methyl-2-oxobutanoate + H2O. The enzyme catalyses (2R,3R)-2,3-dihydroxy-3-methylpentanoate = (S)-3-methyl-2-oxopentanoate + H2O. The protein operates within amino-acid biosynthesis; L-isoleucine biosynthesis; L-isoleucine from 2-oxobutanoate: step 3/4. It participates in amino-acid biosynthesis; L-valine biosynthesis; L-valine from pyruvate: step 3/4. Functionally, functions in the biosynthesis of branched-chain amino acids. Catalyzes the dehydration of (2R,3R)-2,3-dihydroxy-3-methylpentanoate (2,3-dihydroxy-3-methylvalerate) into 2-oxo-3-methylpentanoate (2-oxo-3-methylvalerate) and of (2R)-2,3-dihydroxy-3-methylbutanoate (2,3-dihydroxyisovalerate) into 2-oxo-3-methylbutanoate (2-oxoisovalerate), the penultimate precursor to L-isoleucine and L-valine, respectively. This chain is Dihydroxy-acid dehydratase, found in Crocosphaera subtropica (strain ATCC 51142 / BH68) (Cyanothece sp. (strain ATCC 51142)).